A 330-amino-acid chain; its full sequence is tRNA-modifying protein YgfZ (330 aa).

Folate contacts are provided by W28 and W190.

Belongs to the tRNA-modifying YgfZ family.

It localises to the cytoplasm. In terms of biological role, folate-binding protein involved in regulating the level of ATP-DnaA and in the modification of some tRNAs. It is probably a key factor in regulatory networks that act via tRNA modification, such as initiation of chromosomal replication. The protein is tRNA-modifying protein YgfZ of Yersinia enterocolitica serotype O:8 / biotype 1B (strain NCTC 13174 / 8081).